A 142-amino-acid polypeptide reads, in one-letter code: Holo-[acyl-carrier-protein] synthase (142 aa).

Positions 8 and 57 each coordinate Mg(2+).

This sequence belongs to the P-Pant transferase superfamily. AcpS family. The cofactor is Mg(2+).

The protein resides in the cytoplasm. It catalyses the reaction apo-[ACP] + CoA = holo-[ACP] + adenosine 3',5'-bisphosphate + H(+). Transfers the 4'-phosphopantetheine moiety from coenzyme A to a Ser of acyl-carrier-protein. The chain is Holo-[acyl-carrier-protein] synthase from Maricaulis maris (strain MCS10) (Caulobacter maris).